Here is a 349-residue protein sequence, read N- to C-terminus: Core protein VP7 (349 aa).

N-linked (GlcNAc...) asparagine; by host glycosylation occurs at N287.

Belongs to the orbivirus VP7 family. As to quaternary structure, homotrimer that assemble in a complex of 260 capsomers on an inner scaffold composed of VP3.

It localises to the virion. Functionally, the VP7 protein is one of the five proteins (with VP1, VP3, VP4, and VP6) which form the inner capsid of the virus. In Antilocapra americana (Pronghorn), this protein is Core protein VP7 (Segment-7).